A 419-amino-acid polypeptide reads, in one-letter code: Vacuolar aspartic protease (419 aa).

Positions 1–22 (MQLSLSALTTVALALTSSLVDA) are cleaved as a signal peptide. In terms of domain architecture, Peptidase A1 spans 104 to 415 (YFTEIQIGTP…DLDKNAVGLA (312 aa)). Aspartate 122 is a catalytic residue. The cysteines at positions 135 and 140 are disulfide-linked. An N-linked (GlcNAc...) asparagine glycan is attached at asparagine 157. The active site involves aspartate 307. Cysteine 341 and cysteine 374 are oxidised to a cystine. A glycan (N-linked (GlcNAc...) asparagine) is linked at asparagine 358. The Microbody targeting signal motif lies at 417-419 (TKV).

It belongs to the peptidase A1 family.

The protein resides in the vacuole. The polypeptide is Vacuolar aspartic protease (APR1) (Candida albicans (Yeast)).